Reading from the N-terminus, the 412-residue chain is Serine hydroxymethyltransferase (412 aa).

Residues Leu117 and 121-123 (GHL) each bind (6S)-5,6,7,8-tetrahydrofolate. Lys226 carries the N6-(pyridoxal phosphate)lysine modification. (6S)-5,6,7,8-tetrahydrofolate contacts are provided by residues Glu242 and 350–352 (SPF).

Belongs to the SHMT family. As to quaternary structure, homodimer. Requires pyridoxal 5'-phosphate as cofactor.

The protein localises to the cytoplasm. The enzyme catalyses (6R)-5,10-methylene-5,6,7,8-tetrahydrofolate + glycine + H2O = (6S)-5,6,7,8-tetrahydrofolate + L-serine. It participates in one-carbon metabolism; tetrahydrofolate interconversion. The protein operates within amino-acid biosynthesis; glycine biosynthesis; glycine from L-serine: step 1/1. In terms of biological role, catalyzes the reversible interconversion of serine and glycine with tetrahydrofolate (THF) serving as the one-carbon carrier. Also exhibits THF-independent aldolase activity toward beta-hydroxyamino acids, producing glycine and aldehydes, via a retro-aldol mechanism. This chain is Serine hydroxymethyltransferase, found in Methanosarcina acetivorans (strain ATCC 35395 / DSM 2834 / JCM 12185 / C2A).